Here is a 688-residue protein sequence, read N- to C-terminus: Polyribonucleotide nucleotidyltransferase (688 aa).

Residues Asp484 and Asp490 each contribute to the Mg(2+) site. Residues 550-609 (PTTEIFNVAPDKIVEIIGQGGRVIKEIVEKFEVKIDLNKPSGEVKIMGNKERVLKTKEFI) form the KH domain. The region spanning 626–688 (DEVLEAQVKR…NKGKIALDLA (63 aa)) is the S1 motif domain.

This sequence belongs to the polyribonucleotide nucleotidyltransferase family. Mg(2+) serves as cofactor.

The protein resides in the cytoplasm. The catalysed reaction is RNA(n+1) + phosphate = RNA(n) + a ribonucleoside 5'-diphosphate. Involved in mRNA degradation. Catalyzes the phosphorolysis of single-stranded polyribonucleotides processively in the 3'- to 5'-direction. The chain is Polyribonucleotide nucleotidyltransferase from Helicobacter pylori (strain P12).